The primary structure comprises 295 residues: NAD kinase (295 aa).

The Proton acceptor role is filled by aspartate 72. Residues 72–73 (DG), 146–147 (ND), arginine 157, lysine 174, aspartate 176, 187–192 (TAYALS), and glutamine 247 each bind NAD(+).

This sequence belongs to the NAD kinase family. The cofactor is a divalent metal cation.

The protein localises to the cytoplasm. It catalyses the reaction NAD(+) + ATP = ADP + NADP(+) + H(+). Functionally, involved in the regulation of the intracellular balance of NAD and NADP, and is a key enzyme in the biosynthesis of NADP. Catalyzes specifically the phosphorylation on 2'-hydroxyl of the adenosine moiety of NAD to yield NADP. This is NAD kinase from Pseudomonas aeruginosa (strain LESB58).